We begin with the raw amino-acid sequence, 230 residues long: Secretory carrier-associated membrane protein 4 (230 aa).

Residues 1 to 39 lie on the Cytoplasmic side of the membrane; sequence MAGKENNFPPLPHFLPLKPCFYQDFSDEIPVEHQVLVKR. The next 4 helical transmembrane spans lie at 40–60, 61–81, 106–126, and 149–169; these read IYRL…ACLA, WWIA…LVLF, MAFF…AIGF, and VVML…AITI. The Cytoplasmic segment spans residues 170 to 230; that stretch reads VKVHRIYRGA…SYSTSGSQWP (61 aa). Thr-194 bears the Phosphothreonine mark. Positions 197 to 230 are disordered; sequence NPPSREAQFNSFSGNSLPEYPTVPSYSTSGSQWP. 2 stretches are compositionally biased toward polar residues: residues 203–212 and 220–230; these read AQFNSFSGNS and PSYSTSGSQWP.

The protein belongs to the SCAMP family.

It is found in the membrane. In terms of biological role, probably involved in membrane protein trafficking. This chain is Secretory carrier-associated membrane protein 4 (Scamp4), found in Rattus norvegicus (Rat).